The chain runs to 463 residues: Phosphoglucosamine mutase (463 aa).

The active-site Phosphoserine intermediate is the S101. Mg(2+) is bound by residues S101, D256, D258, and D260. S101 is subject to Phosphoserine.

This sequence belongs to the phosphohexose mutase family. Requires Mg(2+) as cofactor. In terms of processing, activated by phosphorylation.

It catalyses the reaction alpha-D-glucosamine 1-phosphate = D-glucosamine 6-phosphate. In terms of biological role, catalyzes the conversion of glucosamine-6-phosphate to glucosamine-1-phosphate. In Desulforapulum autotrophicum (strain ATCC 43914 / DSM 3382 / VKM B-1955 / HRM2) (Desulfobacterium autotrophicum), this protein is Phosphoglucosamine mutase.